Reading from the N-terminus, the 417-residue chain is Serine hydroxymethyltransferase (417 aa).

Residues Leu-121 and 125–127 each bind (6S)-5,6,7,8-tetrahydrofolate; that span reads GHL. Lys-229 carries the post-translational modification N6-(pyridoxal phosphate)lysine. Residue 355–357 coordinates (6S)-5,6,7,8-tetrahydrofolate; that stretch reads SPF.

This sequence belongs to the SHMT family. As to quaternary structure, homodimer. Pyridoxal 5'-phosphate serves as cofactor.

Its subcellular location is the cytoplasm. The catalysed reaction is (6R)-5,10-methylene-5,6,7,8-tetrahydrofolate + glycine + H2O = (6S)-5,6,7,8-tetrahydrofolate + L-serine. It functions in the pathway one-carbon metabolism; tetrahydrofolate interconversion. Its pathway is amino-acid biosynthesis; glycine biosynthesis; glycine from L-serine: step 1/1. In terms of biological role, catalyzes the reversible interconversion of serine and glycine with tetrahydrofolate (THF) serving as the one-carbon carrier. This reaction serves as the major source of one-carbon groups required for the biosynthesis of purines, thymidylate, methionine, and other important biomolecules. Also exhibits THF-independent aldolase activity toward beta-hydroxyamino acids, producing glycine and aldehydes, via a retro-aldol mechanism. The polypeptide is Serine hydroxymethyltransferase (Xanthomonas euvesicatoria pv. vesicatoria (strain 85-10) (Xanthomonas campestris pv. vesicatoria)).